A 145-amino-acid chain; its full sequence is Ribosomal protein uL24-like (145 aa).

2 disordered regions span residues 1-21 (MKFNPFVTSDRSKNRKRHFNA) and 122-145 (KAKSRQVGKEKGKYKEELIEKMQE). Glycyl lysine isopeptide (Lys-Gly) (interchain with G-Cter in SUMO2) cross-links involve residues Lys136 and Lys142.

Belongs to the universal ribosomal protein uL24 family.

This Homo sapiens (Human) protein is Ribosomal protein uL24-like (RPL26L1).